Here is a 501-residue protein sequence, read N- to C-terminus: Ribulose bisphosphate carboxylase large chain (501 aa).

Positions 141 and 191 each coordinate substrate. Lysine 193 acts as the Proton acceptor in catalysis. Lysine 195 provides a ligand contact to substrate. The Mg(2+) site is built by lysine 219, aspartate 221, and glutamate 222. Lysine 219 is modified (N6-carboxylysine). Histidine 311 (proton acceptor) is an active-site residue. The substrate site is built by arginine 312, histidine 344, and serine 396.

The protein belongs to the RuBisCO large chain family. Type I subfamily. In terms of assembly, heterohexadecamer of 8 large chains and 8 small chains. Requires Mg(2+) as cofactor.

It catalyses the reaction 2 (2R)-3-phosphoglycerate + 2 H(+) = D-ribulose 1,5-bisphosphate + CO2 + H2O. The enzyme catalyses D-ribulose 1,5-bisphosphate + O2 = 2-phosphoglycolate + (2R)-3-phosphoglycerate + 2 H(+). In terms of biological role, ruBisCO catalyzes two reactions: the carboxylation of D-ribulose 1,5-bisphosphate, the primary event in carbon dioxide fixation, as well as the oxidative fragmentation of the pentose substrate. Both reactions occur simultaneously and in competition at the same active site. The protein is Ribulose bisphosphate carboxylase large chain of Paraburkholderia phymatum (strain DSM 17167 / CIP 108236 / LMG 21445 / STM815) (Burkholderia phymatum).